The following is a 517-amino-acid chain: Dopamine receptor 4 (517 aa).

Residues 1–46 are Extracellular-facing; it reads MLAYGSDPNAEDLYITMTPSVSTENDTTVWATEEPAAIVWRHPLLA. N-linked (GlcNAc...) asparagine glycosylation is present at N25. The helical transmembrane segment at 47–67 threads the bilayer; that stretch reads IALFSICLLTVAGNCLVVIAV. Residues 68 to 77 are Cytoplasmic-facing; it reads CTKKYLRNPT. A helical membrane pass occupies residues 78–98; sequence GYLIISLAIADLIVGVIVMPM. The Extracellular portion of the chain corresponds to 99–108; it reads NSLFEIANHT. N106 carries an N-linked (GlcNAc...) asparagine glycan. The helical transmembrane segment at 109–129 threads the bilayer; sequence WLFGLMMCDVFHAMDILASTA. At 130–159 the chain is on the cytoplasmic side; that stretch reads SIWNLCVISLDRYMAGQDPIGYRDKVSKRR. The helical transmembrane segment at 160-180 threads the bilayer; sequence ILMAILSVWVLSAILSFPGII. Residues 181–209 lie on the Extracellular side of the membrane; sequence WWRTSSPHLYEDQSQCLFTDSKMYVSFSS. Residues 210-230 form a helical membrane-spanning segment; it reads LVSFYIPLFLILFAYGKVYII. Residues 231-409 are Cytoplasmic-facing; the sequence is ATRHSKGMRM…YVHEQRAART (179 aa). Residues 309–339 form a disordered region; it reads NDRGEHNNNNTVRQPLLRGTEGCHSDSISRS. A helical transmembrane segment spans residues 410 to 430; it reads LSIVVGAFILCWTPFFVFTPL. Residues 431–442 lie on the Extracellular side of the membrane; it reads TAFCESCFSNKE. Residues 443–463 form a helical membrane-spanning segment; sequence TIFTFVTWAGHLNSMLNPLIY. The Cytoplasmic portion of the chain corresponds to 464–517; the sequence is SRFSRDFRRAFKQILTCQRQQKVKTAFKTPLSLVFTQLISVTQMWEQPPNTSIE.

It belongs to the G-protein coupled receptor 1 family. In terms of tissue distribution, expressed in pharyngeal neurons I1 and I2, neurons ASG, AVL, CAN, PQR, vulva, intestine, rectal glands and rectal epithelial glands. Also expressed in neurons in ray 8 in males.

The protein resides in the cell membrane. Its function is as follows. Receptor for dopamine. The activity of this receptor is mediated by G proteins which activate adenylyl cyclase. In terms of antagonist responses, would be classed with the D1-like dopamine receptor group. The protein is Dopamine receptor 4 (dop-4) of Caenorhabditis elegans.